A 162-amino-acid chain; its full sequence is Ribonuclease P protein component (162 aa).

Residues 1–67 (MDEKDLAAQP…GGKLVSLKGD (67 aa)) are disordered. Over residues 21–31 (GPHEDPRRQEG) the composition is skewed to basic and acidic residues.

This sequence belongs to the RnpA family. Consists of a catalytic RNA component (M1 or rnpB) and a protein subunit.

It carries out the reaction Endonucleolytic cleavage of RNA, removing 5'-extranucleotides from tRNA precursor.. RNaseP catalyzes the removal of the 5'-leader sequence from pre-tRNA to produce the mature 5'-terminus. It can also cleave other RNA substrates such as 4.5S RNA. The protein component plays an auxiliary but essential role in vivo by binding to the 5'-leader sequence and broadening the substrate specificity of the ribozyme. The chain is Ribonuclease P protein component from Thermus brockianus.